The primary structure comprises 31 residues: Cytochrome b6-f complex subunit 6 (31 aa).

The chain crosses the membrane as a helical span at residues 3-23; that stretch reads VFLGYIIFLAAFFGLATGLFL.

Belongs to the PetL family. The 4 large subunits of the cytochrome b6-f complex are cytochrome b6, subunit IV (17 kDa polypeptide, PetD), cytochrome f and the Rieske protein, while the 4 small subunits are PetG, PetL, PetM and PetN. The complex functions as a dimer.

The protein localises to the plastid. The protein resides in the chloroplast thylakoid membrane. Functionally, component of the cytochrome b6-f complex, which mediates electron transfer between photosystem II (PSII) and photosystem I (PSI), cyclic electron flow around PSI, and state transitions. PetL is important for photoautotrophic growth as well as for electron transfer efficiency and stability of the cytochrome b6-f complex. The chain is Cytochrome b6-f complex subunit 6 from Pyropia yezoensis (Susabi-nori).